The following is a 169-amino-acid chain: UPF0303 protein BruAb1_1406 (169 aa).

Belongs to the UPF0303 family.

The protein is UPF0303 protein BruAb1_1406 of Brucella abortus biovar 1 (strain 9-941).